The chain runs to 237 residues: uncharacterized protein (237 aa).

Position 50–57 (50–57) interacts with ATP; that stretch reads APPGTGKS.

This is an uncharacterized protein from Escherichia coli (strain K12).